The following is a 362-amino-acid chain: G-protein coupled receptor 4 (362 aa).

At 1–8 (MGNRTLEG) the chain is on the extracellular side. N-linked (GlcNAc...) asparagine glycosylation occurs at Asn3. A helical transmembrane segment spans residues 9-45 (CHVDSRMDHLFPPSLYIFVIGVGLPTNCLALWAAYRQ). Disulfide bonds link Cys9–Cys258 and Cys90–Cys168. At 46 to 49 (VRQR) the chain is on the cytoplasmic side. Residues 50-80 (NELGVYLMNLSIADLLYICTLPLWVDYFLHH) form a helical membrane-spanning segment. Over 81-85 (DNWIH) the chain is Extracellular. Residues 86 to 121 (GPGSCKLFGFIFYTNIYISIAFLCCISVDRYLAVAH) form a helical membrane-spanning segment. Residues 122–129 (PLRFARLR) lie on the Cytoplasmic side of the membrane. Residues 130-156 (RVKTAVAVSSVVWATELGANSAPLFHD) traverse the membrane as a helical segment. Residues 157–172 (ELFRDRYNHTFCFEKF) lie on the Extracellular side of the membrane. Residues 157–172 (ELFRDRYNHTFCFEKF) form an extracellular loop 2 (ECL2) region. The N-linked (GlcNAc...) asparagine glycan is linked to Asn164. The helical transmembrane segment at 173 to 210 (PMEGWVAWMNLYRVFVGFLFPWALMLLSYRGILRAVRG) threads the bilayer. Residues 211-214 (SVST) lie on the Cytoplasmic side of the membrane. A helical transmembrane segment spans residues 215-250 (ERQEKVKIKRLALSLIAIVLVCFAPYHVLLLSRSAV). Topologically, residues 251-260 (YLRRPRDCGF) are extracellular. The helical transmembrane segment at 261 to 289 (EERVFSAYHSSLAFTSLNCVADPILYCLV) threads the bilayer. Over 290–362 (NEGARSDVAK…VQLKMLPPAQ (73 aa)) the chain is Cytoplasmic.

It belongs to the G-protein coupled receptor 1 family.

Its subcellular location is the cell membrane. Its activity is regulated as follows. Activated by a network of residues that connects an extracellular-facing cavity to Glu-145, a conserved charged residue buried in the transmembrane core of the receptor. Protonation likely drives conformational changes in extracellular loop 2 (ECL2), which stabilizes movement of transmembrane 3 (TM3) and a series of rearrangements that connect the extracellular-facing cavity to Glu-145, a residue only conserved in proton-sensing G-protein coupled receptors. Its function is as follows. Proton-sensing G-protein coupled receptor activated by extracellular pH, which is required to monitor pH changes and generate adaptive reactions. Activated by an optimal pH of 6.8-7.2. Ligand binding causes a conformation change that triggers signaling via guanine nucleotide-binding proteins (G proteins) and modulates the activity of downstream effectors, such as adenylate cyclase. GPR4 is mainly coupled to G(s) G proteins and mediates activation of adenylate cyclase activity. May also couple with G(q) and G(12)/G(13) G proteins. Acts as a key regulator of respiratory sensitivity to CO2/H(+) in brain retrotrapezoid nucleus neurons: acts by mediating detection of protons generated by the formation of carbonic acid in the blood, an important mechanism to impulse to breathe. Also acts as a regulator of acid secretion in the kidney collecting duct by maintaining acid-base homeostasis in the kidney. Acidosis-induced GPR4 activation increases paracellular gap formation and permeability of vascular endothelial cells, possibly through the G(12)/G(13)/Rho GTPase signaling pathway. This is G-protein coupled receptor 4 (GPR4) from Bos taurus (Bovine).